The following is an 878-amino-acid chain: Alanine--tRNA ligase (878 aa).

His565, His569, Cys667, and His671 together coordinate Zn(2+).

Belongs to the class-II aminoacyl-tRNA synthetase family. The cofactor is Zn(2+).

It localises to the cytoplasm. The catalysed reaction is tRNA(Ala) + L-alanine + ATP = L-alanyl-tRNA(Ala) + AMP + diphosphate. Catalyzes the attachment of alanine to tRNA(Ala) in a two-step reaction: alanine is first activated by ATP to form Ala-AMP and then transferred to the acceptor end of tRNA(Ala). Also edits incorrectly charged Ser-tRNA(Ala) and Gly-tRNA(Ala) via its editing domain. The protein is Alanine--tRNA ligase of Desulforamulus reducens (strain ATCC BAA-1160 / DSM 100696 / MI-1) (Desulfotomaculum reducens).